Reading from the N-terminus, the 79-residue chain is Sec-independent protein translocase protein TatA (79 aa).

The helical transmembrane segment at 1 to 21 threads the bilayer; it reads MGSFSIWHWLIVLAIVVLVFG. Residues 43 to 79 form a disordered region; sequence VKDGSTSTDTPAAAPGQVAGQTAADKTTIDVEAKQKG. Positions 69–79 are enriched in basic and acidic residues; sequence TTIDVEAKQKG.

This sequence belongs to the TatA/E family. As to quaternary structure, the Tat system comprises two distinct complexes: a TatABC complex, containing multiple copies of TatA, TatB and TatC subunits, and a separate TatA complex, containing only TatA subunits. Substrates initially bind to the TatABC complex, which probably triggers association of the separate TatA complex to form the active translocon.

Its subcellular location is the cell inner membrane. Functionally, part of the twin-arginine translocation (Tat) system that transports large folded proteins containing a characteristic twin-arginine motif in their signal peptide across membranes. TatA could form the protein-conducting channel of the Tat system. In Delftia acidovorans (strain DSM 14801 / SPH-1), this protein is Sec-independent protein translocase protein TatA.